The sequence spans 441 residues: Ankyrin repeat and MYND domain-containing protein 2 (441 aa).

3 ANK repeats span residues 45 to 74 (NGMT…DVNC), 79 to 108 (HGYT…ETDV), and 159 to 188 (KLAG…NPLL). Zn(2+) contacts are provided by C320, C323, C332, C335, C341, C345, H353, and C357. An MYND-type zinc finger spans residues 320–357 (CTTCGEKGASKRCSVCKMVIYCDQTCQKTHWFTHKKIC). The span at 374–384 (EKRQEENHGKL) shows a compositional bias: basic and acidic residues. Positions 374–441 (EKRQEENHGK…APAGPQVSEE (68 aa)) are disordered.

Interacts with the retinal-specific guanylyl cyclase GC1.

It is found in the cell projection. The protein localises to the cilium. Its function is as follows. May be involved in the trafficking of signaling proteins to the cilia. The protein is Ankyrin repeat and MYND domain-containing protein 2 (ANKMY2) of Homo sapiens (Human).